We begin with the raw amino-acid sequence, 388 residues long: Protein DJ-1 homolog D (388 aa).

PfpI endopeptidase domains lie at 5 to 190 (RTVL…KALG) and 198 to 383 (KRIL…ALLG). The Nucleophile role is filled by Cys120. Cys120 is modified (cysteine sulfenic acid (-SOH)). His121 is an active-site residue. Cys313 acts as the Nucleophile in catalysis. Cys313 bears the Cysteine sulfinic acid (-SO2H) mark. His314 is a catalytic residue.

It belongs to the peptidase C56 family. Homotrimer. Cys-120 and Cys-313 are oxidized to sulfinic acid.

It catalyses the reaction (R)-S-lactoylglutathione = methylglyoxal + glutathione. Its function is as follows. Possesses glyoxalase I activity. Catalyzes the conversion of hemimercaptal, formed from methylglyoxal and glutathione, to S-lactoylglutathione. May be involved in oxidative stress response. This is Protein DJ-1 homolog D (DJ1D) from Arabidopsis thaliana (Mouse-ear cress).